Reading from the N-terminus, the 640-residue chain is LRR receptor kinase SERL2 (640 aa).

A signal peptide spans 1-22 (MEPPFFLLLLLLVVSSSSPSAA). Over 23–241 (LLSAKGVNNE…AARDRGHKFA (219 aa)) the chain is Extracellular. N-linked (GlcNAc...) asparagine glycosylation is found at Asn94 and Asn107. LRR repeat units follow at residues 95-119 (LTNL…IGRL), 120-143 (ENLK…VGHL), 145-167 (SLQY…SANL), and 168-191 (SHLV…LART). N-linked (GlcNAc...) asparagine glycosylation is found at Asn153, Asn166, Asn179, and Asn222. A helical membrane pass occupies residues 242-262 (VAFGSTAGCMGLLLLAAGFLF). The Cytoplasmic portion of the chain corresponds to 263 to 640 (WWRHRRNRQI…VQAVELSGPR (378 aa)). A Protein kinase domain is found at 304-583 (FSGKNILGKG…EGDGLADRWE (280 aa)). Residues 310 to 318 (LGKGGFGNV) and Lys332 contribute to the ATP site. Asp427 (proton acceptor) is an active-site residue.

Belongs to the protein kinase superfamily. Ser/Thr protein kinase family. In terms of assembly, interacts with MSBP1.

Its subcellular location is the cell membrane. It carries out the reaction L-seryl-[protein] + ATP = O-phospho-L-seryl-[protein] + ADP + H(+). It catalyses the reaction L-threonyl-[protein] + ATP = O-phospho-L-threonyl-[protein] + ADP + H(+). Its function is as follows. LRR receptor kinase that may be involved in defense response. In Oryza sativa subsp. japonica (Rice), this protein is LRR receptor kinase SERL2.